The chain runs to 198 residues: MSVSPQLAQLATWMAGHFNNLHQAIAEPVWFANIHVYQCPLPWSVFQGIGFYVEQLYDIYPDQPYRQRVIHLFETPDGIRIQNYALGSPEAYKCAGRDLGKLASLAAAELELLPGCAVQVEWTGSCYRGRSVPGKGCIVERKGRTTYLYSEFEIGADYFHSLDQGRDPETDQVVWGSLSGPFRFVKKQDFSCYLPRWS.

It belongs to the CpcT/CpeT biliprotein lyase family.

Its function is as follows. Covalently attaches a chromophore to Cys residue(s) of phycobiliproteins. This is Chromophore lyase CpcT/CpeT 3 from Synechococcus sp. (strain JA-3-3Ab) (Cyanobacteria bacterium Yellowstone A-Prime).